The sequence spans 121 residues: uncharacterized protein (121 aa).

The segment at 20–98 (NEVRTSQSEV…PYYHGSKAST (79 aa)) is disordered. Basic and acidic residues predominate over residues 35 to 51 (KKSDNGEKDEKEEKELN).

This is an uncharacterized protein from Invertebrate iridescent virus 6 (IIV-6).